Consider the following 364-residue polypeptide: Putative serine/threonine-protein phosphatase C06A1.3 (364 aa).

The segment at 1 to 24 (MSTDGNNNKKGSKEGPKSSEISKF) is disordered. Residues 11 to 24 (GSKEGPKSSEISKF) show a composition bias toward basic and acidic residues. Asp93, His95, Asp121, and Asn153 together coordinate Mn(2+). Catalysis depends on His154, which acts as the Proton donor. Mn(2+) contacts are provided by His202 and His277.

Belongs to the PPP phosphatase family. PP-1 subfamily. Requires Mn(2+) as cofactor.

The enzyme catalyses O-phospho-L-seryl-[protein] + H2O = L-seryl-[protein] + phosphate. It carries out the reaction O-phospho-L-threonyl-[protein] + H2O = L-threonyl-[protein] + phosphate. The protein is Putative serine/threonine-protein phosphatase C06A1.3 of Caenorhabditis elegans.